The sequence spans 132 residues: uncharacterized protein (132 aa).

This is an uncharacterized protein from Bacillus subtilis (strain 168).